Reading from the N-terminus, the 90-residue chain is NELL2-interacting cell ontogeny regulator 1 (90 aa).

The first 26 residues, 1 to 26, serve as a signal peptide directing secretion; it reads MVSSGYLQAVMLLLAVQLLCFRPSDA.

It belongs to the NICOL family.

The protein localises to the secreted. Its function is as follows. mRNA-binding protein which interacts with a range of target mRNAs and may promote extracellular matrix production. The protein is NELL2-interacting cell ontogeny regulator 1 of Salmo salar (Atlantic salmon).